Reading from the N-terminus, the 233-residue chain is Phosphoribosylformylglycinamidine synthase subunit PurQ (233 aa).

The 231-residue stretch at 3-233 folds into the Glutamine amidotransferase type-1 domain; it reads SAVLVFPGIN…GLVEHLKTAA (231 aa). Catalysis depends on Cys-87, which acts as the Nucleophile. Residues His-204 and Glu-206 contribute to the active site.

In terms of assembly, part of the FGAM synthase complex composed of 1 PurL, 1 PurQ and 2 PurS subunits.

Its subcellular location is the cytoplasm. The enzyme catalyses N(2)-formyl-N(1)-(5-phospho-beta-D-ribosyl)glycinamide + L-glutamine + ATP + H2O = 2-formamido-N(1)-(5-O-phospho-beta-D-ribosyl)acetamidine + L-glutamate + ADP + phosphate + H(+). The catalysed reaction is L-glutamine + H2O = L-glutamate + NH4(+). Its pathway is purine metabolism; IMP biosynthesis via de novo pathway; 5-amino-1-(5-phospho-D-ribosyl)imidazole from N(2)-formyl-N(1)-(5-phospho-D-ribosyl)glycinamide: step 1/2. Part of the phosphoribosylformylglycinamidine synthase complex involved in the purines biosynthetic pathway. Catalyzes the ATP-dependent conversion of formylglycinamide ribonucleotide (FGAR) and glutamine to yield formylglycinamidine ribonucleotide (FGAM) and glutamate. The FGAM synthase complex is composed of three subunits. PurQ produces an ammonia molecule by converting glutamine to glutamate. PurL transfers the ammonia molecule to FGAR to form FGAM in an ATP-dependent manner. PurS interacts with PurQ and PurL and is thought to assist in the transfer of the ammonia molecule from PurQ to PurL. The sequence is that of Phosphoribosylformylglycinamidine synthase subunit PurQ from Rhodopseudomonas palustris (strain HaA2).